Reading from the N-terminus, the 325-residue chain is tRNA U34 carboxymethyltransferase (325 aa).

Carboxy-S-adenosyl-L-methionine-binding positions include lysine 91, tryptophan 105, lysine 110, glycine 130, 152-154 (DPS), methionine 196, tyrosine 200, and arginine 315.

It belongs to the class I-like SAM-binding methyltransferase superfamily. CmoB family. Homotetramer.

It catalyses the reaction carboxy-S-adenosyl-L-methionine + 5-hydroxyuridine(34) in tRNA = 5-carboxymethoxyuridine(34) in tRNA + S-adenosyl-L-homocysteine + H(+). Functionally, catalyzes carboxymethyl transfer from carboxy-S-adenosyl-L-methionine (Cx-SAM) to 5-hydroxyuridine (ho5U) to form 5-carboxymethoxyuridine (cmo5U) at position 34 in tRNAs. In Aeromonas hydrophila subsp. hydrophila (strain ATCC 7966 / DSM 30187 / BCRC 13018 / CCUG 14551 / JCM 1027 / KCTC 2358 / NCIMB 9240 / NCTC 8049), this protein is tRNA U34 carboxymethyltransferase.